The sequence spans 303 residues: Protoheme IX farnesyltransferase 1 (303 aa).

A run of 9 helical transmembrane segments spans residues 18 to 38 (PGII…AAQG), 42 to 62 (LTLM…GCAV), 91 to 111 (AVLS…AIFT), 114 to 134 (LAVL…SLYM), 139 to 159 (VYGT…GYCA), 169 to 189 (VILL…IAIF), 213 to 233 (LHIV…PLAG), 235 to 255 (TGIA…AMAL), and 274 to 294 (FSII…QVVA).

Belongs to the UbiA prenyltransferase family. Protoheme IX farnesyltransferase subfamily.

It localises to the cell inner membrane. The enzyme catalyses heme b + (2E,6E)-farnesyl diphosphate + H2O = Fe(II)-heme o + diphosphate. It participates in porphyrin-containing compound metabolism; heme O biosynthesis; heme O from protoheme: step 1/1. Its function is as follows. Converts heme B (protoheme IX) to heme O by substitution of the vinyl group on carbon 2 of heme B porphyrin ring with a hydroxyethyl farnesyl side group. In Shewanella frigidimarina (strain NCIMB 400), this protein is Protoheme IX farnesyltransferase 1.